The following is a 121-amino-acid chain: uncharacterized protein (121 aa).

To M.jannaschii MJ0017 and MJ1466.

This is an uncharacterized protein from Aquifex aeolicus (strain VF5).